Consider the following 351-residue polypeptide: ADP-glucose phosphorylase (351 aa).

The segment at 1–63 (MTSPSHASDR…QNPNPKPSSC (63 aa)) is disordered. An ADP-alpha-D-glucose-binding site is contributed by 41 to 44 (RAKR). Residues cysteine 63 and cysteine 66 each contribute to the Zn(2+) site. ADP-alpha-D-glucose contacts are provided by residues 72–74 (ECA) and asparagine 94. Residue histidine 133 coordinates Zn(2+). Residues asparagine 173 and 179–182 (GASM) each bind ADP-alpha-D-glucose. Zn(2+) is bound at residue histidine 184. Catalysis depends on histidine 186, which acts as the Tele-AMP-histidine intermediate. An ADP-alpha-D-glucose-binding site is contributed by glutamine 188. Residues cysteine 216, cysteine 219, histidine 255, and histidine 310 each contribute to the Zn(2+) site. ADP-alpha-D-glucose is bound by residues glycine 321 and 325–326 (FE).

Belongs to the galactose-1-phosphate uridylyltransferase type 1 family. As to quaternary structure, homodimer. Requires Zn(2+) as cofactor.

It catalyses the reaction alpha-D-glucose 1-phosphate + ADP + H(+) = ADP-alpha-D-glucose + phosphate. Its function is as follows. Catalyzes the conversion of ADP-glucose and inorganic phosphate (Pi) into glucose-1-phosphate and ADP. Does not possess galactose-1-phosphate uridylyltransferase activity. The polypeptide is ADP-glucose phosphorylase (Arabidopsis thaliana (Mouse-ear cress)).